A 242-amino-acid chain; its full sequence is Orotidine 5'-phosphate decarboxylase (242 aa).

Residues Asp-16, Lys-37, 64-73 (DLKFHDIPNT), Thr-128, Arg-190, Gln-199, Gly-219, and Arg-220 contribute to the substrate site. The Proton donor role is filled by Lys-66.

This sequence belongs to the OMP decarboxylase family. Type 1 subfamily. Homodimer.

The catalysed reaction is orotidine 5'-phosphate + H(+) = UMP + CO2. The protein operates within pyrimidine metabolism; UMP biosynthesis via de novo pathway; UMP from orotate: step 2/2. Its function is as follows. Catalyzes the decarboxylation of orotidine 5'-monophosphate (OMP) to uridine 5'-monophosphate (UMP). This Prochlorococcus marinus (strain MIT 9312) protein is Orotidine 5'-phosphate decarboxylase.